The following is a 156-amino-acid chain: Arginine repressor (156 aa).

It belongs to the ArgR family.

The protein resides in the cytoplasm. It participates in amino-acid biosynthesis; L-arginine biosynthesis [regulation]. Functionally, regulates arginine biosynthesis genes. This is Arginine repressor from Shewanella piezotolerans (strain WP3 / JCM 13877).